A 449-amino-acid polypeptide reads, in one-letter code: Agmatine hydroxycinnamoyltransferase 1 (449 aa).

Catalysis depends on proton acceptor residues His153 and Asp392.

The protein belongs to the plant acyltransferase family. Highly expressed in roots. Expressed at low levels in flowers.

Hydroxycinnamoyl transferase that catalyzes the transfer of an acyl from p-coumaryol-CoA to agmatine, to produce coumaroyl agmatine. Can use feruloyl-CoA, caffeoyl-CoA and sinapoyl-CoA as acyl donors. Seems to be able to transfer the acyl group from p-coumaroyl-CoA and feruloyl-CoA to the acyl acceptors putrescine and spermidine. The polypeptide is Agmatine hydroxycinnamoyltransferase 1 (Oryza sativa subsp. japonica (Rice)).